Reading from the N-terminus, the 416-residue chain is MSLSNKLSITDVDLKGKRVLIRVDFNVPLDENKKITNNQRIVGAIPTIKHALDNGAKAVVLMSHLGRPNGAVNPKYSLKPVVPELERLLGKPVTFARDCVGPEVESIVNDADNGAVILLENLRFHIEEEGSAKDKDGNKTKADKAKVEEFRKGLTALGDIYINDAFGTAHRAHSSMVGVDLPQKAAGFLMKKELDYFAKALESPQRPFLAILGGAKVSDKIQLIDNLLDKVDTLIVCGGMAFTFKKVLNNIPIGTSLFDEAGAKTCPSCREAKAKNVKLVLPVDYITADKFDKDANTGTATDESGIPDGWMGLDCGEKSIELYKEAIADAKTILWNGPAGVFEFDKFANGTKATLDAVVEGCKNGKIVIIGGGDTATVAAKYGVEDKLSHVSTGGGASLELLEGKELPGVVALSSK.

Positions 23, 24, 25, 26, 39, 40, 63, 64, 66, 67, 122, 123, 170, and 171 each coordinate (2R)-3-phosphoglycerate. Glycine 214 provides a ligand contact to ADP. Glycine 214 provides a ligand contact to CDP. Positions 215 and 216 each coordinate AMP. Alanine 215 provides a ligand contact to ATP. Alanine 215 contacts Mg(2+). Aspartate 219 contributes to the CDP binding site. Aspartate 219 lines the Mg(2+) pocket. Lysine 220 provides a ligand contact to AMP. Lysine 220 contacts ATP. Glycine 238 serves as a coordination point for ADP. Residue glycine 238 participates in CDP binding. 2 residues coordinate AMP: glycine 239 and glycine 312. Glycine 239 and glycine 312 together coordinate ATP. Residues glycine 337, alanine 339, and phenylalanine 342 each coordinate CDP. ADP is bound at residue phenylalanine 342. Position 343 (glutamate 343) interacts with AMP. Residues glutamate 343, aspartate 374, and threonine 375 each contribute to the ATP site. Residue aspartate 374 participates in Mg(2+) binding.

The protein belongs to the phosphoglycerate kinase family. As to quaternary structure, monomer. The cofactor is Mg(2+).

It localises to the cytoplasm. Its subcellular location is the mitochondrion. The enzyme catalyses (2R)-3-phosphoglycerate + ATP = (2R)-3-phospho-glyceroyl phosphate + ADP. The protein operates within carbohydrate degradation; glycolysis; pyruvate from D-glyceraldehyde 3-phosphate: step 2/5. In terms of biological role, catalyzes one of the two ATP producing reactions in the glycolytic pathway via the reversible conversion of 1,3-diphosphoglycerate to 3-phosphoglycerate. Both L- and D- forms of purine and pyrimidine nucleotides can be used as substrates, but the activity is much lower on pyrimidines. Negatively regulates the biosynthesis of acetyl-CoA from pyruvate in the mitochondrion. This is Phosphoglycerate kinase (pgk1) from Hypocrea jecorina (Trichoderma reesei).